Reading from the N-terminus, the 341-residue chain is Protein RecA, plasmid (341 aa).

Position 80–87 (80–87 (GAESSGKT)) interacts with ATP.

It belongs to the RecA family.

It is found in the cytoplasm. Functionally, can catalyze the hydrolysis of ATP in the presence of single-stranded DNA, the ATP-dependent uptake of single-stranded DNA by duplex DNA, and the ATP-dependent hybridization of homologous single-stranded DNAs. It interacts with LexA causing its activation and leading to its autocatalytic cleavage. This is Protein RecA, plasmid from Lactococcus lactis subsp. lactis (Streptococcus lactis).